We begin with the raw amino-acid sequence, 126 residues long: Sperm-specific H1/protamine-like protein type 2 (126 aa).

The region spanning 5–84 (KKPTTLSMIV…GATGSFRVGK (80 aa)) is the H15 domain. A disordered region spans residues 74–126 (SGATGSFRVGKAPASPKKAKKAKSPKKKSSKKSKNKSNNAKAKKSPKKKADSN). Over residues 90–120 (KKAKKAKSPKKKSSKKSKNKSNNAKAKKSPK) the composition is skewed to basic residues.

OE2 and OE3 are produced by post-translational cleavage of a common precursor. In terms of tissue distribution, sperm.

The protein resides in the nucleus. It localises to the chromosome. In terms of biological role, linker histones are implicated in chromatin remodeling and/or transcriptional regulation during spermiogenesis, the process of spermatid maturation into spermatozoa. Protamines substitute for histones in the chromatin of sperm during the haploid phase of spermatogenesis. They compact sperm DNA into a highly condensed, stable and inactive complex. The sequence is that of Sperm-specific H1/protamine-like protein type 2 from Ostrea edulis (Native oyster).